Here is a 517-residue protein sequence, read N- to C-terminus: Crotonobetaine/carnitine--CoA ligase (517 aa).

It belongs to the ATP-dependent AMP-binding enzyme family.

The enzyme catalyses 4-(trimethylamino)butanoate + ATP + CoA = 4-(trimethylamino)butanoyl-CoA + AMP + diphosphate. It catalyses the reaction crotonobetaine + ATP + CoA = crotonobetainyl-CoA + AMP + diphosphate. The catalysed reaction is (R)-carnitine + ATP + CoA = (R)-carnitinyl-CoA + AMP + diphosphate. Its pathway is amine and polyamine metabolism; carnitine metabolism. Its function is as follows. Catalyzes the transfer of CoA to carnitine, generating the initial carnitinyl-CoA needed for the CaiB reaction cycle. Also has activity toward crotonobetaine and gamma-butyrobetaine. The polypeptide is Crotonobetaine/carnitine--CoA ligase (Escherichia coli O6:K15:H31 (strain 536 / UPEC)).